A 311-amino-acid chain; its full sequence is Large ribosomal subunit protein uL18 (311 aa).

The protein belongs to the universal ribosomal protein uL18 family. Component of the large ribosomal subunit (LSU).

It is found in the cytoplasm. The protein localises to the nucleus. In terms of biological role, component of the ribosome, a large ribonucleoprotein complex responsible for the synthesis of proteins in the cell. The small ribosomal subunit (SSU) binds messenger RNAs (mRNAs) and translates the encoded message by selecting cognate aminoacyl-transfer RNA (tRNA) molecules. The large subunit (LSU) contains the ribosomal catalytic site termed the peptidyl transferase center (PTC), which catalyzes the formation of peptide bonds, thereby polymerizing the amino acids delivered by tRNAs into a polypeptide chain. The nascent polypeptides leave the ribosome through a tunnel in the LSU and interact with protein factors that function in enzymatic processing, targeting, and the membrane insertion of nascent chains at the exit of the ribosomal tunnel. The chain is Large ribosomal subunit protein uL18 (RPL5) from Eimeria tenella (Coccidian parasite).